A 750-amino-acid chain; its full sequence is Photosystem I P700 chlorophyll a apoprotein A1 (750 aa).

Transmembrane regions (helical) follow at residues 70–93, 156–179, 195–219, 291–309, 346–369, 385–411, 433–455, and 531–549; these read VFSAHFGQLSIIFLWLSGMYFHGA, LYCTAIGALVFAALMLFAGWFHYH, LNHHLAGLLGLGSLSWAGHQVHVSL, IAHHHLAIAILFLIAGHMY, WHAQLSLNLAMLGSLTIVVAHHMY, LSLFTHHMWIGGFLIVGAAAHAAIFMV, AIISHLNWACIFLGFHSFGLYIH, and FLVHHIHAFTIHVTVLILL. Positions 573 and 582 each coordinate [4Fe-4S] cluster. Helical transmembrane passes span 589–610 and 664–686; these read HVFLGLFWMYNSISVVIFHFSW and LSAYGLFFLGAHFVWAFSLMFLF. His-675 lines the chlorophyll a' pocket. Residues Met-683 and Tyr-691 each contribute to the chlorophyll a site. Trp-692 is a binding site for phylloquinone. The chain crosses the membrane as a helical span at residues 724-744; it reads AVGVTHYLLGGIATTWAFFLA.

The protein belongs to the PsaA/PsaB family. In terms of assembly, the PsaA/B heterodimer binds the P700 chlorophyll special pair and subsequent electron acceptors. PSI consists of a core antenna complex that captures photons, and an electron transfer chain that converts photonic excitation into a charge separation. The eukaryotic PSI reaction center is composed of at least 11 subunits. P700 is a chlorophyll a/chlorophyll a' dimer, A0 is one or more chlorophyll a, A1 is one or both phylloquinones and FX is a shared 4Fe-4S iron-sulfur center. is required as a cofactor.

It localises to the plastid. The protein resides in the chloroplast thylakoid membrane. It catalyses the reaction reduced [plastocyanin] + hnu + oxidized [2Fe-2S]-[ferredoxin] = oxidized [plastocyanin] + reduced [2Fe-2S]-[ferredoxin]. In terms of biological role, psaA and PsaB bind P700, the primary electron donor of photosystem I (PSI), as well as the electron acceptors A0, A1 and FX. PSI is a plastocyanin-ferredoxin oxidoreductase, converting photonic excitation into a charge separation, which transfers an electron from the donor P700 chlorophyll pair to the spectroscopically characterized acceptors A0, A1, FX, FA and FB in turn. Oxidized P700 is reduced on the lumenal side of the thylakoid membrane by plastocyanin. In Vitis vinifera (Grape), this protein is Photosystem I P700 chlorophyll a apoprotein A1.